Here is a 507-residue protein sequence, read N- to C-terminus: Transposase for insertion sequences IS1326/IS1353 (507 aa).

An HTH IS21-type domain is found at 6-68 (ILSAIRRWHF…PFEPKLRQWL (63 aa)). Residues 19-40 (ASIREIARRSGLSRNTVRKYLQ) constitute a DNA-binding region (H-T-H motif). Residues 122-302 (GCFIPLRFAC…TVQEAFADEQ (181 aa)) enclose the Integrase catalytic domain.

Belongs to the transposase IS21/IS408/IS1162 family.

In terms of biological role, required for the transposition of the insertion element. This is Transposase for insertion sequences IS1326/IS1353 (istA) from Pseudomonas aeruginosa.